Consider the following 301-residue polypeptide: Lufaxin (301 aa).

Positions 1–23 (MNSINFLSIVGLISFGFIVAVKC) are cleaved as a signal peptide. 4 disulfides stabilise this stretch: C52-C60, C78-C137, C102-C112, and C258-C265. N262 carries an N-linked (GlcNAc...) asparagine glycan.

Interacts with factor Xa. Associates with complement proconvertase C3b-B complex. In terms of tissue distribution, expressed in salivary glands.

The protein resides in the secreted. Its function is as follows. Sand fly salivary protein with antithrombotic, and anti-complement (alternative pathway) activities. Is a slow, tight, non-competitive, and reversible inhibitor of factor Xa (FXa, F10). Is specific for FXa (Kd=3.86 nM) and does not interact with non-activated FX, or all other enzymes tested. In addition, it blocks prothrombinase and increases both prothrombin time and activated partial thromboplastin time. It also prevents protease-activated receptor 2 (F2RL1, PAR2) activation by FXa. In vivo, it abrogates edema formation triggered by injection of FXa in the paw of mice. Moreover, it prevents FeCl(3)-induced carotid artery thrombus formation and prolongs activated partial thromboplastin time ex vivo, implying that it works as an anticoagulant in vivo. It also inhibits the early steps of the alternative pathway of complement by direct binding to the proconvertase C3b-B complex, by inhibiting activation of factor B and consequently the formation of the C3 convertase. The protein is Lufaxin of Lutzomyia longipalpis (Sand fly).